The sequence spans 140 residues: Phosphopantetheine adenylyltransferase (140 aa).

S9 provides a ligand contact to substrate. ATP-binding positions include 9–10 (SF) and H17. Substrate contacts are provided by K41, T74, and R88. Residues 89–91 (GLR), E99, and 124–130 (KRSLSST) each bind ATP.

It belongs to the bacterial CoaD family. In terms of assembly, homohexamer. It depends on Mg(2+) as a cofactor.

Its subcellular location is the cytoplasm. It carries out the reaction (R)-4'-phosphopantetheine + ATP + H(+) = 3'-dephospho-CoA + diphosphate. It participates in cofactor biosynthesis; coenzyme A biosynthesis; CoA from (R)-pantothenate: step 4/5. In terms of biological role, reversibly transfers an adenylyl group from ATP to 4'-phosphopantetheine, yielding dephospho-CoA (dPCoA) and pyrophosphate. The polypeptide is Phosphopantetheine adenylyltransferase (Mycoplasma capricolum subsp. capricolum (strain California kid / ATCC 27343 / NCTC 10154)).